The chain runs to 141 residues: uncharacterized protein (141 aa).

This is an uncharacterized protein from Escherichia coli (strain K12).